The primary structure comprises 112 residues: Large ribosomal subunit protein bL17 (112 aa).

This sequence belongs to the bacterial ribosomal protein bL17 family. In terms of assembly, part of the 50S ribosomal subunit. Contacts protein L32.

In Caldanaerobacter subterraneus subsp. tengcongensis (strain DSM 15242 / JCM 11007 / NBRC 100824 / MB4) (Thermoanaerobacter tengcongensis), this protein is Large ribosomal subunit protein bL17.